The following is a 130-amino-acid chain: Protein ApaG (130 aa).

An ApaG domain is found at 3 to 127 (KAETRGISVI…FSLDVPHMRR (125 aa)).

This is Protein ApaG from Methylobacterium nodulans (strain LMG 21967 / CNCM I-2342 / ORS 2060).